The chain runs to 449 residues: Glucose-6-phosphate isomerase (449 aa).

Threonine 38 bears the Phosphothreonine mark. Glutamate 290 functions as the Proton donor in the catalytic mechanism. Catalysis depends on residues histidine 311 and lysine 425.

It belongs to the GPI family.

It is found in the cytoplasm. It carries out the reaction alpha-D-glucose 6-phosphate = beta-D-fructose 6-phosphate. Its pathway is carbohydrate biosynthesis; gluconeogenesis. The protein operates within carbohydrate degradation; glycolysis; D-glyceraldehyde 3-phosphate and glycerone phosphate from D-glucose: step 2/4. Its function is as follows. Catalyzes the reversible isomerization of glucose-6-phosphate to fructose-6-phosphate. The protein is Glucose-6-phosphate isomerase of Geobacillus thermodenitrificans (strain NG80-2).